Consider the following 513-residue polypeptide: 5-aminolevulinate synthase, erythroid-specific, mitochondrial (513 aa).

A mitochondrion-targeting transit peptide spans 1-18 (MAAFLRCPLLARHPPLAR). R98 contributes to the succinyl-CoA binding site. Positions 190 and 191 each coordinate pyridoxal 5'-phosphate. 2 residues coordinate succinyl-CoA: S212 and K231. S264, H292, and T320 together coordinate pyridoxal 5'-phosphate. Residue K323 is part of the active site. The residue at position 323 (K323) is an N6-(pyridoxal phosphate)lysine. Residues T352 and T353 each contribute to the pyridoxal 5'-phosphate site. Position 437 (T437) interacts with succinyl-CoA.

Belongs to the class-II pyridoxal-phosphate-dependent aminotransferase family. As to quaternary structure, homodimer. Requires pyridoxal 5'-phosphate as cofactor. Erythroid-specific.

It is found in the mitochondrion inner membrane. The catalysed reaction is succinyl-CoA + glycine + H(+) = 5-aminolevulinate + CO2 + CoA. Its pathway is porphyrin-containing compound metabolism; protoporphyrin-IX biosynthesis; 5-aminolevulinate from glycine: step 1/1. In terms of biological role, catalyzes the pyridoxal 5'-phosphate (PLP)-dependent condensation of succinyl-CoA and glycine to form aminolevulinic acid (ALA), with CoA and CO2 as by-products. Contributes significantly to heme formation during erythropoiesis. The chain is 5-aminolevulinate synthase, erythroid-specific, mitochondrial (ALAS2) from Gallus gallus (Chicken).